The following is a 359-amino-acid chain: MAKITIKVGSNLLVQQDGQLDKRYIVELCREIGNLMSEGHQVVLVSSGARAAGYGYLNKSNAQEADLYMKQALCAVGQVQLMKLYESAMSFYGIKVAQILLTREDFSHRKRFLNLRNTLIGLTEMGILPIVNENDSVATEEIMFGDNDVLASMFAIGWNADYLLLMTSVDGVIDQNGKVIPFYREDTTNMAIAKNASSRWGSGGITSKIRAARAAAAAGIQTSICNGKKLENIAQFVLTGQTGTVFERVGPIKAKKAWIGFLSKPKGSIFINEGAKIAIENNRSLLPVGVVHIEGDFQAGDVVEIRLDDGTFLGKGIINFSSAEAKKIVGLKSDQLEDVLGYSCSKVLIHIDNLWKRDN.

Lys-7 serves as a coordination point for ATP. Substrate contacts are provided by Ser-47, Asp-135, and Asn-147. 202–208 (SGGITSK) provides a ligand contact to ATP. The region spanning 266–343 (KGSIFINEGA…DQLEDVLGYS (78 aa)) is the PUA domain.

The protein belongs to the glutamate 5-kinase family.

It localises to the cytoplasm. The catalysed reaction is L-glutamate + ATP = L-glutamyl 5-phosphate + ADP. The protein operates within amino-acid biosynthesis; L-proline biosynthesis; L-glutamate 5-semialdehyde from L-glutamate: step 1/2. In terms of biological role, catalyzes the transfer of a phosphate group to glutamate to form L-glutamate 5-phosphate. The chain is Glutamate 5-kinase from Kosmotoga olearia (strain ATCC BAA-1733 / DSM 21960 / TBF 19.5.1).